A 385-amino-acid chain; its full sequence is Mannitol-1-phosphate 5-dehydrogenase (385 aa).

An NAD(+)-binding site is contributed by 3-14; the sequence is ALHFGAGNIGRG.

The protein belongs to the mannitol dehydrogenase family.

The catalysed reaction is D-mannitol 1-phosphate + NAD(+) = beta-D-fructose 6-phosphate + NADH + H(+). The chain is Mannitol-1-phosphate 5-dehydrogenase from Pasteurella multocida (strain Pm70).